The chain runs to 373 residues: UDP-N-acetylglucosamine--N-acetylmuramyl-(pentapeptide) pyrophosphoryl-undecaprenol N-acetylglucosamine transferase (373 aa).

UDP-N-acetyl-alpha-D-glucosamine is bound by residues 16 to 18, asparagine 128, arginine 164, serine 192, isoleucine 250, and glutamine 295; that span reads TGG.

It belongs to the glycosyltransferase 28 family. MurG subfamily.

It is found in the cell inner membrane. It carries out the reaction di-trans,octa-cis-undecaprenyl diphospho-N-acetyl-alpha-D-muramoyl-L-alanyl-D-glutamyl-meso-2,6-diaminopimeloyl-D-alanyl-D-alanine + UDP-N-acetyl-alpha-D-glucosamine = di-trans,octa-cis-undecaprenyl diphospho-[N-acetyl-alpha-D-glucosaminyl-(1-&gt;4)]-N-acetyl-alpha-D-muramoyl-L-alanyl-D-glutamyl-meso-2,6-diaminopimeloyl-D-alanyl-D-alanine + UDP + H(+). The protein operates within cell wall biogenesis; peptidoglycan biosynthesis. Its function is as follows. Cell wall formation. Catalyzes the transfer of a GlcNAc subunit on undecaprenyl-pyrophosphoryl-MurNAc-pentapeptide (lipid intermediate I) to form undecaprenyl-pyrophosphoryl-MurNAc-(pentapeptide)GlcNAc (lipid intermediate II). The polypeptide is UDP-N-acetylglucosamine--N-acetylmuramyl-(pentapeptide) pyrophosphoryl-undecaprenol N-acetylglucosamine transferase (Paraburkholderia phymatum (strain DSM 17167 / CIP 108236 / LMG 21445 / STM815) (Burkholderia phymatum)).